A 323-amino-acid polypeptide reads, in one-letter code: Serine racemase (323 aa).

S32, S33, and K52 together coordinate ATP. K57 (proton acceptor) is an active-site residue. Position 57 is a lysino-D-alanine (Lys); alternate (K57). Position 57 is an N6-(pyridoxal phosphate)lysine; alternate (K57). A Ca(2+)-binding site is contributed by T79. The active-site Proton acceptor is S82. N84 provides a ligand contact to pyridoxal 5'-phosphate. The ATP site is built by Q87 and Y119. Mg(2+) is bound at residue D176. 5 residues coordinate pyridoxal 5'-phosphate: G183, G184, G185, G186, and L187. 3 residues coordinate Ca(2+): E208, G212, and D214. E208, G212, and D214 together coordinate Mg(2+). Mn(2+) is bound by residues E208, G212, and D214. Position 277 (K277) interacts with ATP. A pyridoxal 5'-phosphate-binding site is contributed by S308. N311 serves as a coordination point for ATP.

The protein belongs to the serine/threonine dehydratase family. Homodimer. Mg(2+) serves as cofactor. It depends on Mn(2+) as a cofactor. The cofactor is Ca(2+). Requires pyridoxal 5'-phosphate as cofactor. Modification of the active site Lys by its substrate Ser to lysino-D-alanine reduces but does not abolish enzyme activity.

The enzyme catalyses L-serine = D-serine. It catalyses the reaction L-serine = pyruvate + NH4(+). It carries out the reaction D-serine = pyruvate + NH4(+). Its activity is regulated as follows. Allosterically activated by ATP, by magnesium, and possibly also by other divalent metal cations. In terms of biological role, catalyzes the synthesis of D-serine from L-serine. Has dehydratase activity towards both L-serine and D-serine. The chain is Serine racemase from Schizosaccharomyces pombe (strain 972 / ATCC 24843) (Fission yeast).